The following is a 251-amino-acid chain: Triosephosphate isomerase (251 aa).

Position 9 to 11 (asparagine 9 to lysine 11) interacts with substrate. Histidine 95 acts as the Electrophile in catalysis. Glutamate 167 serves as the catalytic Proton acceptor. Substrate contacts are provided by residues glycine 173, serine 212, and glycine 233 to glycine 234.

Belongs to the triosephosphate isomerase family. Homodimer.

The protein localises to the cytoplasm. The catalysed reaction is D-glyceraldehyde 3-phosphate = dihydroxyacetone phosphate. It functions in the pathway carbohydrate biosynthesis; gluconeogenesis. The protein operates within carbohydrate degradation; glycolysis; D-glyceraldehyde 3-phosphate from glycerone phosphate: step 1/1. Involved in the gluconeogenesis. Catalyzes stereospecifically the conversion of dihydroxyacetone phosphate (DHAP) to D-glyceraldehyde-3-phosphate (G3P). The chain is Triosephosphate isomerase from Pseudomonas entomophila (strain L48).